Reading from the N-terminus, the 667-residue chain is Coiled-coil domain-containing protein 154 (667 aa).

Coiled coils occupy residues 76–182, 215–302, 384–410, and 457–521; these read VVEL…QEAG, RRVD…GQHE, LLRE…SGHL, and LRGV…KEDN.

The protein resides in the early endosome. The polypeptide is Coiled-coil domain-containing protein 154 (Homo sapiens (Human)).